The sequence spans 291 residues: Formamidopyrimidine-DNA glycosylase (291 aa).

Catalysis depends on proline 2, which acts as the Schiff-base intermediate with DNA. Residue glutamate 3 is the Proton donor of the active site. The Proton donor; for beta-elimination activity role is filled by lysine 58. DNA contacts are provided by histidine 100, arginine 123, and lysine 166. Residues 257-291 (SVYGREGKECSRCGMHIVRIVQSGRSSFYCPQCQK) form an FPG-type zinc finger. Arginine 281 functions as the Proton donor; for delta-elimination activity in the catalytic mechanism.

Belongs to the FPG family. In terms of assembly, monomer. The cofactor is Zn(2+).

The enzyme catalyses Hydrolysis of DNA containing ring-opened 7-methylguanine residues, releasing 2,6-diamino-4-hydroxy-5-(N-methyl)formamidopyrimidine.. It catalyses the reaction 2'-deoxyribonucleotide-(2'-deoxyribose 5'-phosphate)-2'-deoxyribonucleotide-DNA = a 3'-end 2'-deoxyribonucleotide-(2,3-dehydro-2,3-deoxyribose 5'-phosphate)-DNA + a 5'-end 5'-phospho-2'-deoxyribonucleoside-DNA + H(+). Involved in base excision repair of DNA damaged by oxidation or by mutagenic agents. Acts as a DNA glycosylase that recognizes and removes damaged bases. Has a preference for oxidized purines, such as 7,8-dihydro-8-oxoguanine (8-oxoG). Has AP (apurinic/apyrimidinic) lyase activity and introduces nicks in the DNA strand. Cleaves the DNA backbone by beta-delta elimination to generate a single-strand break at the site of the removed base with both 3'- and 5'-phosphates. This Bartonella bacilliformis (strain ATCC 35685 / KC583 / Herrer 020/F12,63) protein is Formamidopyrimidine-DNA glycosylase.